Reading from the N-terminus, the 99-residue chain is Protein IDA-LIKE 3 (99 aa).

An N-terminal signal peptide occupies residues 1-32 (MSSRSHRSRKYQLTRTIPILVLLLVLLSCCNG). Residues 36-45 (TNVFNTSSPP) are compositionally biased toward polar residues. Disordered stretches follow at residues 36–58 (TNVF…HDHV) and 73–99 (SLPR…STKT). Residues 46–58 (KQKDVVSPPHDHV) show a composition bias toward basic and acidic residues.

Expressed in flowers and seedlings. Detected at the base of pedicel, in the floral abscission zone and in vascular tissues.

It is found in the secreted. The protein localises to the extracellular space. In terms of biological role, may be involved in floral abscission. The sequence is that of Protein IDA-LIKE 3 (IDL3) from Arabidopsis thaliana (Mouse-ear cress).